The primary structure comprises 31 residues: MPTITSYFGFLLVALTITSALFIGLSKIRLI.

A helical membrane pass occupies residues 4–24 (ITSYFGFLLVALTITSALFIG).

It belongs to the PetL family. In terms of assembly, the 4 large subunits of the cytochrome b6-f complex are cytochrome b6, subunit IV (17 kDa polypeptide, PetD), cytochrome f and the Rieske protein, while the 4 small subunits are PetG, PetL, PetM and PetN. The complex functions as a dimer.

Its subcellular location is the plastid. It is found in the chloroplast thylakoid membrane. Its function is as follows. Component of the cytochrome b6-f complex, which mediates electron transfer between photosystem II (PSII) and photosystem I (PSI), cyclic electron flow around PSI, and state transitions. PetL is important for photoautotrophic growth as well as for electron transfer efficiency and stability of the cytochrome b6-f complex. The polypeptide is Cytochrome b6-f complex subunit 6 (Panax ginseng (Korean ginseng)).